Here is a 121-residue protein sequence, read N- to C-terminus: Non-structural protein 3a (121 aa).

A signal peptide spans 1–39 (MMSMRSRRSMFIEHFNELMMRVQRPPTLLLILLVANAFS).

The protein is Non-structural protein 3a of Bat coronavirus HKU5 (BtCoV).